The chain runs to 338 residues: Anthranilate phosphoribosyltransferase (338 aa).

Residues G78, 81 to 82, S86, 88 to 91, 106 to 114, and S118 contribute to the 5-phospho-alpha-D-ribose 1-diphosphate site; these read GD, NIST, and KHGNKSITS. G78 contributes to the anthranilate binding site. Position 90 (S90) interacts with Mg(2+). Residue N109 participates in anthranilate binding. R163 contributes to the anthranilate binding site. 2 residues coordinate Mg(2+): D222 and E223.

The protein belongs to the anthranilate phosphoribosyltransferase family. As to quaternary structure, homodimer. It depends on Mg(2+) as a cofactor.

The enzyme catalyses N-(5-phospho-beta-D-ribosyl)anthranilate + diphosphate = 5-phospho-alpha-D-ribose 1-diphosphate + anthranilate. The protein operates within amino-acid biosynthesis; L-tryptophan biosynthesis; L-tryptophan from chorismate: step 2/5. Functionally, catalyzes the transfer of the phosphoribosyl group of 5-phosphorylribose-1-pyrophosphate (PRPP) to anthranilate to yield N-(5'-phosphoribosyl)-anthranilate (PRA). This Staphylococcus carnosus (strain TM300) protein is Anthranilate phosphoribosyltransferase.